A 122-amino-acid chain; its full sequence is Large ribosomal subunit protein uL14 (122 aa).

Belongs to the universal ribosomal protein uL14 family. As to quaternary structure, part of the 50S ribosomal subunit. Forms a cluster with proteins L3 and L19. In the 70S ribosome, L14 and L19 interact and together make contacts with the 16S rRNA in bridges B5 and B8.

Functionally, binds to 23S rRNA. Forms part of two intersubunit bridges in the 70S ribosome. The protein is Large ribosomal subunit protein uL14 of Clostridium perfringens (strain ATCC 13124 / DSM 756 / JCM 1290 / NCIMB 6125 / NCTC 8237 / Type A).